We begin with the raw amino-acid sequence, 46 residues long: Diuretic hormone (46 aa).

Residue I46 is modified to Isoleucine amide.

The protein belongs to the sauvagine/corticotropin-releasing factor/urotensin I family.

Its subcellular location is the secreted. Functionally, regulation of fluid secretion. Stimulates primary urine secretion by Malpighian tubules and causes a dose-dependent stimulation of cAMP levels in the tubules. This Acheta domesticus (House cricket) protein is Diuretic hormone.